We begin with the raw amino-acid sequence, 490 residues long: Sporulation-specific protein 1 (490 aa).

In terms of domain architecture, Protein kinase spans 18–272 (YSIQSCIGRG…AYNLLSFEFV (255 aa)). Residues 24–32 (IGRGNFGDV) and Lys-47 contribute to the ATP site. The active-site Proton acceptor is the Asp-141.

It belongs to the protein kinase superfamily. STE Ser/Thr protein kinase family. STE20 subfamily.

The protein localises to the nucleus. The protein resides in the cytoplasm. The enzyme catalyses L-seryl-[protein] + ATP = O-phospho-L-seryl-[protein] + ADP + H(+). It carries out the reaction L-threonyl-[protein] + ATP = O-phospho-L-threonyl-[protein] + ADP + H(+). Functionally, serine/threonine protein kinase required for spore wall development. This is Sporulation-specific protein 1 (SPS1) from Saccharomyces cerevisiae (strain ATCC 204508 / S288c) (Baker's yeast).